The sequence spans 249 residues: NAD kinase (249 aa).

Aspartate 45 (proton acceptor) is an active-site residue. NAD(+)-binding positions include 45-46, arginine 50, 110-111, aspartate 138, and 149-154; these read DG, NE, and SGWGMS.

This sequence belongs to the NAD kinase family. The cofactor is a divalent metal cation.

The protein resides in the cytoplasm. The enzyme catalyses NAD(+) + ATP = ADP + NADP(+) + H(+). In terms of biological role, involved in the regulation of the intracellular balance of NAD and NADP, and is a key enzyme in the biosynthesis of NADP. Catalyzes specifically the phosphorylation on 2'-hydroxyl of the adenosine moiety of NAD to yield NADP. The protein is NAD kinase of Saccharolobus islandicus (strain Y.N.15.51 / Yellowstone #2) (Sulfolobus islandicus).